A 456-amino-acid chain; its full sequence is Phosphatidylinositol N-acetylglucosaminyltransferase gpi3 subunit (456 aa).

This sequence belongs to the glycosyltransferase group 1 family. Glycosyltransferase 4 subfamily. As to quaternary structure, component of a Phosphatidylinositol N-acetylglucosaminyltransferase complex.

The enzyme catalyses a 1,2-diacyl-sn-glycero-3-phospho-(1D-myo-inositol) + UDP-N-acetyl-alpha-D-glucosamine = a 6-(N-acetyl-alpha-D-glucosaminyl)-1-(1,2-diacyl-sn-glycero-3-phospho)-1D-myo-inositol + UDP + H(+). It participates in glycolipid biosynthesis; glycosylphosphatidylinositol-anchor biosynthesis. Its function is as follows. Catalytic subunit in the complex catalyzing the transfer of N-acetylglucosamine from UDP-N-acetylglucosamine to phosphatidylinositol, the first step of GPI biosynthesis. In Schizosaccharomyces pombe (strain 972 / ATCC 24843) (Fission yeast), this protein is Phosphatidylinositol N-acetylglucosaminyltransferase gpi3 subunit (gpi3).